A 412-amino-acid polypeptide reads, in one-letter code: CinA-like protein (412 aa).

This sequence belongs to the CinA family.

This is CinA-like protein from Kosmotoga olearia (strain ATCC BAA-1733 / DSM 21960 / TBF 19.5.1).